We begin with the raw amino-acid sequence, 433 residues long: Tol-Pal system protein TolB (433 aa).

The N-terminal stretch at 1 to 21 (MIKRLRGLLVLLCCVAGMAMA) is a signal peptide.

This sequence belongs to the TolB family. As to quaternary structure, the Tol-Pal system is composed of five core proteins: the inner membrane proteins TolA, TolQ and TolR, the periplasmic protein TolB and the outer membrane protein Pal. They form a network linking the inner and outer membranes and the peptidoglycan layer.

Its subcellular location is the periplasm. Functionally, part of the Tol-Pal system, which plays a role in outer membrane invagination during cell division and is important for maintaining outer membrane integrity. In Pseudomonas entomophila (strain L48), this protein is Tol-Pal system protein TolB.